Consider the following 899-residue polypeptide: MTDKSIKELALSVGRPVEKLLEQAREAGLPQRTADDIITTEQQDTLVNYLKKVHGQESGNTGKIALKRKTTSTAKVASTSGKAKTINVEVRKKQVFAKPNPEQIAAEAKARAEAEAKARAEQQAREAAEQKARLQTEQKAKATLDAMRAAHQQDSAAQSAPKAAVVVEKRGGGTVKPAPKPAETLEQKKAREAQTAQLKATEEAARRKAAEEAQQRTLEQMRKMASKYSNDDATATIRVIDDSPLASGLVGQAYEDSFNQEDREIKRGGATTNPRAGKKGGRRGQEEQSFVNHNKRGLKSSQANKHGFEKPVKKQVYDVEIGSSIVVADLAQKMAIKVREVIKTLMKMGELVNQNQTIDQDTAALVVEEMGHNPVLVSDTQAEDNLLEAAEEARGEQTTRPPVVTIMGHVDHGKTSLLDRIRRSKVAAGEAGGITQHIGAYHVETDKGIITFLDTPGHAAFTSMRARGAKATDIVVLVVAADDGVMPQTAEAIDHARAAGTPIIVAINKMDKESADPDRVLNELTTKEIVPEEWGGDVPVAKVSAHTGQGIDELLDLILIQSELMELKASAEGAAQGVVIEARVDKGRGAVTSILVQNGTLNIGDLVLAGSSYGRVRAMSDENGKPIKSAGPSIPVEILGLPEAPMAGDEVLVVNDEKKAREVADARADREREKRIERQSAMRLENIMASMGKKDVPTVNVVLRTDVRGTLEALNAALHELSTDEVKVRVISSGVGAITESDVILAESSEAVLLGFNVRADTAARQKSDQDGIDIRYYSIIYELIDDVKDAMSGKLAPEHRETILGVAQVREVFRSSKFGAAAGCMVMEGVIHRNKPIRVLRDDVVIFQGELESLRRYKDVVDEVRAGMECGLAVKGYNDIKPLDKIEVYDVQIVKRSL.

Disordered regions lie at residues 115 to 137, 170 to 189, and 262 to 309; these read EAKARAEQQAREAAEQKARLQTE, RGGGTVKPAPKPAETLEQKK, and DREI…HGFE. The 170-residue stretch at 399–568 folds into the tr-type G domain; sequence TRPPVVTIMG…LIQSELMELK (170 aa). The G1 stretch occupies residues 408-415; the sequence is GHVDHGKT. 408–415 is a binding site for GTP; the sequence is GHVDHGKT. Residues 433 to 437 form a G2 region; the sequence is GITQH. Positions 454 to 457 are G3; it reads DTPG. Residues 454–458 and 508–511 contribute to the GTP site; these read DTPGH and NKMD. The segment at 508 to 511 is G4; sequence NKMD. Positions 544–546 are G5; sequence SAH.

Belongs to the TRAFAC class translation factor GTPase superfamily. Classic translation factor GTPase family. IF-2 subfamily.

It is found in the cytoplasm. Functionally, one of the essential components for the initiation of protein synthesis. Protects formylmethionyl-tRNA from spontaneous hydrolysis and promotes its binding to the 30S ribosomal subunits. Also involved in the hydrolysis of GTP during the formation of the 70S ribosomal complex. In Acinetobacter baumannii (strain SDF), this protein is Translation initiation factor IF-2.